The sequence spans 349 residues: Peroxidase 7 (349 aa).

An N-terminal signal peptide occupies residues 1–22 (MKLAVVSVVVILGVLVAWPVSA). Intrachain disulfides connect Cys60-Cys136, Cys93-Cys98, Cys142-Cys341, and Cys220-Cys252. The active-site Proton acceptor is His91. Positions 92, 95, 97, 99, and 101 each coordinate Ca(2+). Pro183 contributes to the substrate binding site. Position 213 (His213) interacts with heme b. Position 214 (Thr214) interacts with Ca(2+). Asn231 carries N-linked (GlcNAc...) asparagine glycosylation. Ca(2+)-binding residues include Asp262, Thr265, and Asp270.

Belongs to the peroxidase family. Classical plant (class III) peroxidase subfamily. Requires heme b as cofactor. The cofactor is Ca(2+).

The protein resides in the secreted. The catalysed reaction is 2 a phenolic donor + H2O2 = 2 a phenolic radical donor + 2 H2O. Its function is as follows. Removal of H(2)O(2), oxidation of toxic reductants, biosynthesis and degradation of lignin, suberization, auxin catabolism, response to environmental stresses such as wounding, pathogen attack and oxidative stress. These functions might be dependent on each isozyme/isoform in each plant tissue. The protein is Peroxidase 7 (PER7) of Arabidopsis thaliana (Mouse-ear cress).